Consider the following 537-residue polypeptide: Chaperonin GroEL 3 (537 aa).

ATP-binding positions include 30–33 (TLGP), 87–91 (DGTTT), Gly414, 480–482 (DAL), and Asp496.

This sequence belongs to the chaperonin (HSP60) family. Forms a cylinder of 14 subunits composed of two heptameric rings stacked back-to-back. Interacts with the co-chaperonin GroES.

It localises to the cytoplasm. The enzyme catalyses ATP + H2O + a folded polypeptide = ADP + phosphate + an unfolded polypeptide.. Functionally, together with its co-chaperonin GroES, plays an essential role in assisting protein folding. The GroEL-GroES system forms a nano-cage that allows encapsulation of the non-native substrate proteins and provides a physical environment optimized to promote and accelerate protein folding. This is Chaperonin GroEL 3 from Acaryochloris marina (strain MBIC 11017).